The primary structure comprises 306 residues: Peroxisome biogenesis factor 2 (306 aa).

The Peroxisomal matrix portion of the chain corresponds to 1–15 (MAASENNMEEINPVL). The chain crosses the membrane as a helical span at residues 16-42 (RISQLDAIELNKALEQLIWSQFSSCFQ). Topologically, residues 43 to 48 (GFKPGL) are cytoplasmic. The helical transmembrane segment at 49-74 (LTRFEPEIKASLCLFLWRYTIYTKNA) threads the bilayer. The Peroxisomal matrix segment spans residues 75–98 (TVGQTILNMQYKNDLAVTKKYRPL). A helical membrane pass occupies residues 99–125 (NKQQKVWFALFLVGGKWLEERSFDLFS). Residues 126 to 134 (NHPFGASFQ) lie on the Cytoplasmic side of the membrane. A helical transmembrane segment spans residues 135–161 (RTKYFLNAISGLLKFGALLNFLIFLQQ). At 162–188 (GKFATLTERLLGIRSVFSRPQDVRQVG) the chain is on the peroxisomal matrix side. A helical transmembrane segment spans residues 189–212 (FEYMNREILWHGFAEFLIFLLPLI). Residues 213-306 (NTQKLKSKLF…KIEISEVHTL (94 aa)) are Cytoplasmic-facing. Zn(2+)-binding residues include C245, C248, C260, H262, C265, C268, C281, and C284. The RING-type zinc-finger motif lies at 245 to 285 (CCLCGEWPAMPHTIGCSHVFCYYCIKSNYMSDMYFTCPKCS).

Belongs to the pex2/pex10/pex12 family. As to quaternary structure, component of the PEX2-PEX10-PEX12 retrotranslocation channel.

Its subcellular location is the peroxisome membrane. The catalysed reaction is [E2 ubiquitin-conjugating enzyme]-S-ubiquitinyl-L-cysteine + [acceptor protein]-L-cysteine = [E2 ubiquitin-conjugating enzyme]-L-cysteine + [acceptor protein]-S-ubiquitinyl-L-cysteine.. It catalyses the reaction S-ubiquitinyl-[E2 ubiquitin-conjugating enzyme]-L-cysteine + [acceptor protein]-L-lysine = [E2 ubiquitin-conjugating enzyme]-L-cysteine + N(6)-ubiquitinyl-[acceptor protein]-L-lysine.. The protein operates within protein modification; protein ubiquitination. E3 ubiquitin-protein ligase component of a retrotranslocation channel required for peroxisome organization by mediating export of the PEX5 receptor from peroxisomes to the cytosol, thereby promoting PEX5 recycling. The retrotranslocation channel is composed of PEX2, PEX10 and PEX12; each subunit contributing transmembrane segments that coassemble into an open channel that specifically allows the passage of PEX5 through the peroxisomal membrane. PEX2 also regulates peroxisome organization by acting as a E3 ubiquitin-protein ligase. The protein is Peroxisome biogenesis factor 2 of Xenopus laevis (African clawed frog).